The following is a 698-amino-acid chain: Elongation factor G (698 aa).

The tr-type G domain maps to 6-281 (ENIRNIGICA…AVVDYLPSPI (276 aa)). GTP is bound by residues 15–22 (AHIDAGKT), 79–83 (DTPGH), and 133–136 (NKMD).

This sequence belongs to the TRAFAC class translation factor GTPase superfamily. Classic translation factor GTPase family. EF-G/EF-2 subfamily.

The protein resides in the cytoplasm. Its function is as follows. Catalyzes the GTP-dependent ribosomal translocation step during translation elongation. During this step, the ribosome changes from the pre-translocational (PRE) to the post-translocational (POST) state as the newly formed A-site-bound peptidyl-tRNA and P-site-bound deacylated tRNA move to the P and E sites, respectively. Catalyzes the coordinated movement of the two tRNA molecules, the mRNA and conformational changes in the ribosome. This chain is Elongation factor G, found in Rickettsia bellii (strain RML369-C).